The sequence spans 431 residues: Putative F-box/FBD/LRR-repeat protein At3g56780 (431 aa).

Positions 6-62 (CSCINELPDDLILKILSFVSTKHVVVTSLLSKKWKSLWTRVPILKYDVRDHTRFERF) constitute an F-box domain. 8 LRR repeats span residues 56-82 (HTRFERFLDKSLFSHQSHVLESLHVEL), 88-113 (NKDIGPWIRTALHHHHCHLRELEIDA), 135-161 (LKGIVIDVEAPLTTVSLPSLKTLHIDH), 162-187 (SSLFDFGSLQMLLSNCNFITDLMVIR), 209-236 (LEGLKDVISISSSSAVCLPLLKTLHVAR), 237-262 (MEDFNNDSFCRLLSNCPVLSDLTLEE), 264-285 (TSDVLLNLDIDMPYLQRLSIIT), and 357-382 (CSERSVEMLVDLLLCFTKLVVLKLEH). The FBD domain occupies 391-423 (RWEPPSLVPECLLSSLEALEWKGYTGRYGDKDL).

This is Putative F-box/FBD/LRR-repeat protein At3g56780 from Arabidopsis thaliana (Mouse-ear cress).